The primary structure comprises 381 residues: MFKWAQAALANVAGTKEPIYGPEAIRSVAEEAKTTPYTETTKDDLKWQAMESTCVETQCFYFMTDSGQLAFAQVIYSNVAGIRTTCQFNCKVFSLDGSKPHLWCSTPLNNHEFSEDKTSFYATDCAVELSEDGNSYTIKSLNDERSIVNVTIKRTAPGFKIGTSGTTLFGTDLANPWGSMRHVFWPRCVAEGTIATPDGPVDCKGRAMFVHALQGMKPHHAAAKWNFCNFQGPNYSAVLMQYTTPPSYGSTVVNVGGIVKDNEIIFAGAEGAVTHVAIKGDTENDWPEPTAIKFEWKGTTKDGKQADAVLEGELEDKLDRIDVMAEVPGFVKQIVAGAVGTKPYIYQYAPQKKKLTLKLKLGEEEISEEGYLFSEATFISA.

The interval 1–18 (MFKWAQAALANVAGTKEP) is peripherally associates with membranes.

The protein belongs to the SVF1 family.

It localises to the golgi apparatus. The protein localises to the cis-Golgi network membrane. Its subcellular location is the endoplasmic reticulum membrane. The protein resides in the cytoplasm. It is found in the nucleus. In terms of biological role, ceramide-binding protein that may transfer ceramides from the endoplasmic reticulum membrane to the cis-Golgi network membrane, and is thereby required for the biosynthesis of complex sphingolipids. The protein is Ceramide-binding protein svf-1 (svf-1) of Neurospora crassa (strain ATCC 24698 / 74-OR23-1A / CBS 708.71 / DSM 1257 / FGSC 987).